The following is an 884-amino-acid chain: Pyruvate, phosphate dikinase (884 aa).

Residues 1–351 form an N-terminal region; it reads MSTRRVYFFG…LWMLQARAGK (351 aa). Arg-99 is a binding site for ATP. The segment at 352–408 is linker 1; that stretch reads RTGFAMVRIAIDMCKEGMLTEEEALLRIDANKINEFLFKRFDPSVKPVVLGKGIPAS. A central region spans residues 409–507; it reads PGAAVGVICF…KFKEGDFISI (99 aa). Thr-462 is modified (phosphothreonine; by PDRP1). His-464 (tele-phosphohistidine intermediate) is an active-site residue. Residues 508–542 form a linker 2 region; that stretch reads NGTTGEIYNGAVQTIEPGITDDLQTIMDWSDKYRV. The C-terminal stretch occupies residues 543-884; it reads LKIRTNADTP…IAAIKARTNQ (342 aa). 7 residues coordinate substrate: Arg-570, Arg-626, Glu-753, Gly-774, Thr-775, Asn-776, and Asp-777. Residue Glu-753 participates in Mg(2+) binding. Asp-777 provides a ligand contact to Mg(2+). The active-site Proton donor is the Cys-839.

The protein belongs to the PEP-utilizing enzyme family. In terms of assembly, homodimer. The cofactor is Mg(2+). Post-translationally, phosphorylation of Thr-462 in the dark inactivates the enzyme. Dephosphorylation upon light stimulation reactivates the enzyme.

The enzyme catalyses pyruvate + phosphate + ATP = phosphoenolpyruvate + AMP + diphosphate + H(+). Activated by light-induced dephosphorylation. Inhibited by dark-induced phosphorylation. Both reactions are catalyzed by PDRP1. Catalyzes the reversible phosphorylation of pyruvate and phosphate. The protein is Pyruvate, phosphate dikinase of Giardia intestinalis (Giardia lamblia).